The primary structure comprises 728 residues: Homoaconitase, mitochondrial (728 aa).

The transit peptide at 1–24 (MVAIPRLARLSVPAWALSARGRFY) directs the protein to the mitochondrion. [4Fe-4S] cluster is bound by residues cysteine 362, cysteine 422, and cysteine 425.

It belongs to the aconitase/IPM isomerase family. Requires [4Fe-4S] cluster as cofactor.

It localises to the mitochondrion. It catalyses the reaction (2R,3S)-homoisocitrate = cis-homoaconitate + H2O. Its pathway is amino-acid biosynthesis; L-lysine biosynthesis via AAA pathway; L-alpha-aminoadipate from 2-oxoglutarate: step 3/5. Functionally, catalyzes the reversible hydration of cis-homoaconitate to (2R,3S)-homoisocitrate, a step in the alpha-aminoadipate pathway for lysine biosynthesis. This chain is Homoaconitase, mitochondrial (LYS4), found in Cryptococcus neoformans var. neoformans serotype D (strain B-3501A) (Filobasidiella neoformans).